The following is a 198-amino-acid chain: Mitrocomin (198 aa).

A propeptide spanning residues 1 to 8 (MSMGSRYA) is cleaved from the precursor. 3 EF-hand domains span residues 19–54 (KWIA…IICK), 118–147 (DALF…AGIQ), and 148–183 (QSRG…FWYS). Residues Asp32, Asn34, Asn36, Gln38, Glu43, Asp125, Asp127, Asn129, Ser131, Glu136, Asp161, Asp163, Asp165, Lys167, and Glu172 each coordinate Ca(2+).

This sequence belongs to the aequorin family.

In terms of biological role, ca(2+)-dependent bioluminescence photoprotein. Displays an emission peak at 470 nm (blue light). Trace amounts of calcium ion trigger the intramolecular oxidation of the chromophore, coelenterazine into coelenteramide and CO(2) with the concomitant emission of light. The sequence is that of Mitrocomin (MI17) from Mitrocoma cellularia (Cross jellyfish).